We begin with the raw amino-acid sequence, 261 residues long: Cell division protein DivIB (261 aa).

The Cytoplasmic segment spans residues 1 to 27; sequence MEKGKVVVLEDRVPKLKERRRQKANRR. Residues 28 to 48 traverse the membrane as a helical segment; it reads LIAYLSFFFLFILCVLYFQSP. The tract at residues 47–117 is alpha; it reads SPLGAVGHVE…PNTIAIHVRE (71 aa). Topologically, residues 49–261 are extracellular; sequence LGAVGHVEVS…KEDGDETTSP (213 aa). A POTRA domain is found at 50–118; sequence GAVGHVEVSG…NTIAIHVREW (69 aa). Positions 118 to 230 are beta; sequence WRRIAYVYDR…YPAIAAALDR (113 aa). Residues 231–260 are gamma; it reads NVKGVIHLEVGSYFVPYSPPKKEDGDETTS.

This sequence belongs to the FtsQ/DivIB family. DivIB subfamily.

It is found in the cell membrane. In terms of biological role, cell division protein that may be involved in stabilizing or promoting the assembly of the division complex. In Geobacillus kaustophilus (strain HTA426), this protein is Cell division protein DivIB.